A 184-amino-acid chain; its full sequence is Gremlin-1 (184 aa).

Residues 1-24 (MNRTAYTVGALLLLLGTLLPAAEG) form the signal peptide. Asn2 and Asn42 each carry an N-linked (GlcNAc...) asparagine glycan. Residues 24–78 (GKKKGSQGAIPPPDKAQHNDSEQTQSPPQPGSRTRGRGQGRGTAMPGEEVLESSQ) form a disordered region. Cystine bridges form between Cys94–Cys144, Cys108–Cys158, Cys118–Cys176, and Cys122–Cys178. The region spanning 94–184 (CKTQPLKQTI…QCRCISIDLD (91 aa)) is the CTCK domain.

Belongs to the DAN family. Homodimer; can also form homooligomers. Interacts with BMP2; can form higher oligomers with BMP2. Interacts with SLIT1 and SLIT2 in a glycosylation-dependent manner. Highly expressed in the brain, kidney, spleen, and testis and weakly expressed in the lung and liver. Predominantly expressed in differentiated cells as neurons in brain, type I cells in lung and globlet cells in intestine.

It localises to the secreted. Cytokine that may play an important role during carcinogenesis and metanephric kidney organogenesis, as a BMP antagonist required for early limb outgrowth and patterning in maintaining the FGF4-SHH feedback loop. Down-regulates the BMP4 signaling in a dose-dependent manner. Antagonist of BMP2; inhibits BMP2-mediated differentiation of osteoblasts (in vitro). Acts as inhibitor of monocyte chemotaxis. Can inhibit the growth or viability of normal cells but not transformed cells when is overexpressed. The protein is Gremlin-1 (Grem1) of Rattus norvegicus (Rat).